A 139-amino-acid polypeptide reads, in one-letter code: Putative pre-16S rRNA nuclease (139 aa).

It belongs to the YqgF nuclease family.

It is found in the cytoplasm. Could be a nuclease involved in processing of the 5'-end of pre-16S rRNA. This is Putative pre-16S rRNA nuclease from Caldanaerobacter subterraneus subsp. tengcongensis (strain DSM 15242 / JCM 11007 / NBRC 100824 / MB4) (Thermoanaerobacter tengcongensis).